A 382-amino-acid chain; its full sequence is Mannitol-1-phosphate 5-dehydrogenase (382 aa).

3–14 is an NAD(+) binding site; the sequence is ALHFGAGNIGRG. Position 269 is an N6-acetyllysine (Lys269).

Belongs to the mannitol dehydrogenase family. As to quaternary structure, monomer.

It carries out the reaction D-mannitol 1-phosphate + NAD(+) = beta-D-fructose 6-phosphate + NADH + H(+). This is Mannitol-1-phosphate 5-dehydrogenase from Escherichia coli O157:H7.